We begin with the raw amino-acid sequence, 1475 residues long: Sterol 3-beta-glucosyltransferase (1475 aa).

Disordered stretches follow at residues 1 to 73 and 94 to 218; these read MPPP…PPMF and HDRF…EDDK. The segment covering 8 to 17 has biased composition (low complexity); it reads LPLHGPAGAA. Over residues 30 to 40 the composition is skewed to basic residues; it reads RVGKKLQKKRH. Residues 108–118 are compositionally biased toward basic and acidic residues; sequence GPQRDSADRSH. Basic residues predominate over residues 156-168; that stretch reads EKHKRKISGHKLL. The GRAM 1 domain occupies 270-315; that stretch reads QDIFEFDQPEAVIEEYPCWLLQSVLLQGYMYITAKHICFYSYLPKK. The 96-residue stretch at 318-413 folds into the PH domain; that stretch reads EVVKSGYLSK…WVKSLQRVIF (96 aa). 3 disordered regions span residues 492–541, 594–636, and 653–715; these read ARLK…TTNK, SSPR…MEEP, and QILR…PVTP. Residues 505-531 show a composition bias toward low complexity; that stretch reads QQQQQQHPMQPPMQASARSSMSGSRRA. 2 stretches are compositionally biased toward polar residues: residues 621-634 and 653-674; these read QQGS…SSME and QILR…SASR. Basic and acidic residues predominate over residues 675 to 686; that stretch reads TEVEKQQRRDPR. A GRAM 2 domain is found at 798-901; that stretch reads RFRAHFALPE…RDDCAVTLLQ (104 aa). UDP-alpha-D-glucose is bound by residues Ser-989, Arg-990, Asp-992, Ala-1293, His-1295, His-1308, Ser-1311, Gly-1312, Thr-1313, Asp-1332, and Gln-1333. The disordered stretch occupies residues 1413 to 1475; sequence IQVEPDEDEE…RVSPSQQSVA (63 aa). Positions 1416 to 1425 are enriched in acidic residues; that stretch reads EPDEDEESAE.

It belongs to the glycosyltransferase 28 family.

The protein localises to the cytoplasm. It localises to the preautophagosomal structure membrane. It carries out the reaction a sterol + UDP-alpha-D-glucose = a sterol 3-beta-D-glucoside + UDP + H(+). The catalysed reaction is ergosterol + UDP-alpha-D-glucose = ergosteryl 3-beta-D-glucoside + UDP + H(+). Its function is as follows. Sterol glycosyltransferase responsible for the glycosylation of ergosterol to form ergosterol-glucoside. Mediates autophagic degradation of peroxisomes (pexophagy) and is involved in pathogenesis via peroxisome degradation inside appressoria that are developing into the host invasion stage. The protein is Sterol 3-beta-glucosyltransferase of Glomerella lagenarium (Anthracnose fungus).